The primary structure comprises 244 residues: Demethylmenaquinone methyltransferase (244 aa).

Residues threonine 65, aspartate 86, and 114–115 each bind S-adenosyl-L-methionine; that span reads DA.

The protein belongs to the class I-like SAM-binding methyltransferase superfamily. MenG/UbiE family.

The enzyme catalyses a 2-demethylmenaquinol + S-adenosyl-L-methionine = a menaquinol + S-adenosyl-L-homocysteine + H(+). It functions in the pathway quinol/quinone metabolism; menaquinone biosynthesis; menaquinol from 1,4-dihydroxy-2-naphthoate: step 2/2. In terms of biological role, methyltransferase required for the conversion of demethylmenaquinol (DMKH2) to menaquinol (MKH2). This chain is Demethylmenaquinone methyltransferase, found in Lactobacillus johnsonii (strain CNCM I-12250 / La1 / NCC 533).